We begin with the raw amino-acid sequence, 165 residues long: V-type proton ATPase 16 kDa proteolipid subunit (165 aa).

Topologically, residues 1-10 are lumenal; that stretch reads MSSVFSGDET. The helical transmembrane segment at 11–33 threads the bilayer; sequence APFFGFLGAAAALVFSCMGAAYG. Residues 34–55 are Cytoplasmic-facing; the sequence is TAKSGVGVASMGVMRPELVMKS. A helical transmembrane segment spans residues 56 to 76; it reads IVPVVMAGVLGIYGLIIAVII. Residues 77-95 lie on the Lumenal side of the membrane; that stretch reads STGINPKAKPYFLFDGYAH. Residues 96–117 traverse the membrane as a helical segment; that stretch reads LSSGLACGLAGLAAGMAIGIVG. Residues 118-129 are Cytoplasmic-facing; that stretch reads DAGVRANAQQPK. The helical transmembrane segment at 130–155 threads the bilayer; it reads LFVGMILILIFAEALALYGLIVGIIL. The Lumenal portion of the chain corresponds to 156 to 165; the sequence is SSRAGQSRAD.

Belongs to the V-ATPase proteolipid subunit family. In terms of assembly, V-ATPase is a heteromultimeric enzyme composed of a peripheral catalytic V1 complex (main components: subunits A, B, C, D, E, and F) attached to an integral membrane V0 proton pore complex (main component: the proteolipid protein; which is present as a hexamer that forms the proton-conducting pore).

The protein localises to the vacuole membrane. Functionally, proton-conducting pore forming subunit of the membrane integral V0 complex of vacuolar ATPase. V-ATPase is responsible for acidifying a variety of intracellular compartments in eukaryotic cells. In Avena sativa (Oat), this protein is V-type proton ATPase 16 kDa proteolipid subunit (VATP-P1).